The primary structure comprises 383 residues: Acetylornithine deacetylase (383 aa).

His80 is a binding site for Zn(2+). Residue Asp82 is part of the active site. Asp112 provides a ligand contact to Zn(2+). Glu144 is a catalytic residue. Positions 145, 169, and 355 each coordinate Zn(2+).

The protein belongs to the peptidase M20A family. ArgE subfamily. In terms of assembly, homodimer. Requires Zn(2+) as cofactor. Co(2+) is required as a cofactor. Glutathione serves as cofactor.

Its subcellular location is the cytoplasm. It catalyses the reaction N(2)-acetyl-L-ornithine + H2O = L-ornithine + acetate. The protein operates within amino-acid biosynthesis; L-arginine biosynthesis; L-ornithine from N(2)-acetyl-L-ornithine (linear): step 1/1. Its function is as follows. Catalyzes the hydrolysis of the amide bond of N(2)-acetylated L-amino acids. Cleaves the acetyl group from N-acetyl-L-ornithine to form L-ornithine, an intermediate in L-arginine biosynthesis pathway, and a branchpoint in the synthesis of polyamines. This is Acetylornithine deacetylase from Salmonella heidelberg (strain SL476).